The primary structure comprises 71 residues: MTKFTFSRFVIFSLFFTFISVSTFGNINFRFIVCKWTIFSFVALFYIFTHTSFTSLCFFGLRLFWHFFPRM.

2 helical membrane passes run 9 to 29 (FVIF…NINF) and 41 to 61 (FVAL…FFGL).

The protein resides in the membrane. This is an uncharacterized protein from Acheta domesticus (House cricket).